The sequence spans 372 residues: Alanine dehydrogenase 2 (372 aa).

Histidine 95 is an active-site residue. 169 to 199 (KVTIIGGGQAGTNAAKIALGLGADVTILDVN) is an NAD(+) binding site.

This sequence belongs to the AlaDH/PNT family.

It carries out the reaction L-alanine + NAD(+) + H2O = pyruvate + NH4(+) + NADH + H(+). The protein operates within amino-acid degradation; L-alanine degradation via dehydrogenase pathway; NH(3) and pyruvate from L-alanine: step 1/1. Functionally, may play a role in cell wall synthesis as L-alanine is an important constituent of the peptidoglycan layer. In Staphylococcus aureus (strain Mu50 / ATCC 700699), this protein is Alanine dehydrogenase 2 (ald2).